Consider the following 249-residue polypeptide: 5'-nucleotidase SurE (249 aa).

A divalent metal cation is bound by residues Asp-8, Asp-9, Ser-39, and Asn-91.

This sequence belongs to the SurE nucleotidase family. It depends on a divalent metal cation as a cofactor.

It localises to the cytoplasm. It catalyses the reaction a ribonucleoside 5'-phosphate + H2O = a ribonucleoside + phosphate. Nucleotidase that shows phosphatase activity on nucleoside 5'-monophosphates. In Pseudomonas putida (strain W619), this protein is 5'-nucleotidase SurE.